The sequence spans 263 residues: Chymotrypsinogen B (263 aa).

The first 18 residues, 1 to 18 (MAFLWLVSCFALVGATFG), serve as a signal peptide directing secretion. Disulfide bonds link C19–C140, C60–C76, C154–C219, C186–C200, and C209–C238. Positions 34–261 (IVNGEDAIPG…LMPWVQQILE (228 aa)) constitute a Peptidase S1 domain. H75 acts as the Charge relay system in catalysis. S93 is subject to Phosphoserine. D120 serves as the catalytic Charge relay system. S213 serves as the catalytic Charge relay system.

This sequence belongs to the peptidase S1 family.

Its subcellular location is the secreted. The protein resides in the extracellular space. It catalyses the reaction Preferential cleavage: Tyr-|-Xaa, Trp-|-Xaa, Phe-|-Xaa, Leu-|-Xaa.. The sequence is that of Chymotrypsinogen B (Ctrb1) from Rattus norvegicus (Rat).